We begin with the raw amino-acid sequence, 172 residues long: 3-hydroxydecanoyl-[acyl-carrier-protein] dehydratase (172 aa).

H71 is an active-site residue.

Belongs to the thioester dehydratase family. FabA subfamily. As to quaternary structure, homodimer.

The protein localises to the cytoplasm. The enzyme catalyses a (3R)-hydroxyacyl-[ACP] = a (2E)-enoyl-[ACP] + H2O. It carries out the reaction (3R)-hydroxydecanoyl-[ACP] = (2E)-decenoyl-[ACP] + H2O. It catalyses the reaction (2E)-decenoyl-[ACP] = (3Z)-decenoyl-[ACP]. It participates in lipid metabolism; fatty acid biosynthesis. Its function is as follows. Necessary for the introduction of cis unsaturation into fatty acids. Catalyzes the dehydration of (3R)-3-hydroxydecanoyl-ACP to E-(2)-decenoyl-ACP and then its isomerization to Z-(3)-decenoyl-ACP. Can catalyze the dehydratase reaction for beta-hydroxyacyl-ACPs with saturated chain lengths up to 16:0, being most active on intermediate chain length. This is 3-hydroxydecanoyl-[acyl-carrier-protein] dehydratase from Escherichia fergusonii (strain ATCC 35469 / DSM 13698 / CCUG 18766 / IAM 14443 / JCM 21226 / LMG 7866 / NBRC 102419 / NCTC 12128 / CDC 0568-73).